A 142-amino-acid polypeptide reads, in one-letter code: Small ribosomal subunit protein bS6 (142 aa).

Over residues 110–133 the composition is skewed to basic and acidic residues; it reads NKKPSHAKEKHEKTEHTHSHHTEE. The segment at 110–142 is disordered; sequence NKKPSHAKEKHEKTEHTHSHHTEEAESVGSHSE.

The protein belongs to the bacterial ribosomal protein bS6 family.

Functionally, binds together with bS18 to 16S ribosomal RNA. The protein is Small ribosomal subunit protein bS6 (rpsF) of Helicobacter pylori (strain ATCC 700392 / 26695) (Campylobacter pylori).